A 282-amino-acid chain; its full sequence is Glucuronoxylan 4-O-methyltransferase 1 (282 aa).

A helical membrane pass occupies residues 13-33 (VLLVFLLATLILIFIVRSTLT).

The protein belongs to the methyltransferase superfamily. Expressed in rosette leaves, stems, flowers and siliques.

It localises to the golgi apparatus membrane. It catalyses the reaction glucuronoxylan D-glucuronate + n S-adenosyl-L-methionine = glucuronoxylan 4-O-methyl-D-glucuronate + n S-adenosyl-L-homocysteine + n H(+). Methyltransferase catalyzing 4-O-methylation of glucuronic acid side chains on xylan. The chain is Glucuronoxylan 4-O-methyltransferase 1 (GXM1) from Arabidopsis thaliana (Mouse-ear cress).